The sequence spans 206 residues: MVKIIGISGGSGSGKTTIVNKISEVISEFVLISQDNYYKSVGDYEYEFLDVNFDHPDAFDNNLFYKQLKKLKENQSINMPLYDFINHKRRDETIKIVPTPIIIVEGIMIFVEERVRNLIDLKIYIDTPNDIRFIRRLERDMSKRGRTLESVIEQYLRTTRAGYYRFIEPTKEYADLIIPEGGHNDKALYVLSSFLKTLVKDSSKFF.

Position 9–16 (9–16 (GGSGSGKT)) interacts with ATP.

Belongs to the uridine kinase family.

The protein resides in the cytoplasm. The enzyme catalyses uridine + ATP = UMP + ADP + H(+). It catalyses the reaction cytidine + ATP = CMP + ADP + H(+). It functions in the pathway pyrimidine metabolism; CTP biosynthesis via salvage pathway; CTP from cytidine: step 1/3. The protein operates within pyrimidine metabolism; UMP biosynthesis via salvage pathway; UMP from uridine: step 1/1. This Borrelia duttonii (strain Ly) protein is Uridine kinase.